The chain runs to 255 residues: Pyrroloquinoline-quinone synthase (255 aa).

Belongs to the PqqC family.

It carries out the reaction 6-(2-amino-2-carboxyethyl)-7,8-dioxo-1,2,3,4,7,8-hexahydroquinoline-2,4-dicarboxylate + 3 O2 = pyrroloquinoline quinone + 2 H2O2 + 2 H2O + H(+). Its pathway is cofactor biosynthesis; pyrroloquinoline quinone biosynthesis. In terms of biological role, ring cyclization and eight-electron oxidation of 3a-(2-amino-2-carboxyethyl)-4,5-dioxo-4,5,6,7,8,9-hexahydroquinoline-7,9-dicarboxylic-acid to PQQ. This Cereibacter sphaeroides (strain ATCC 17029 / ATH 2.4.9) (Rhodobacter sphaeroides) protein is Pyrroloquinoline-quinone synthase.